The primary structure comprises 127 residues: MARIAGVDLPRNKRIEIAITYIFGIGRSNGAEVLRKANVNPATRVRDLTEEEVSRIREIVEREYRVEGDLRREIQMNIKRLMDIGCYRGLRHRKGMPVRGQRTRTNARTRRGRRGQAIGIKKKTVKK.

The protein belongs to the universal ribosomal protein uS13 family. Part of the 30S ribosomal subunit. Forms a loose heterodimer with protein S19. Forms two bridges to the 50S subunit in the 70S ribosome.

Located at the top of the head of the 30S subunit, it contacts several helices of the 16S rRNA. In the 70S ribosome it contacts the 23S rRNA (bridge B1a) and protein L5 of the 50S subunit (bridge B1b), connecting the 2 subunits; these bridges are implicated in subunit movement. Contacts the tRNAs in the A and P-sites. This Roseiflexus sp. (strain RS-1) protein is Small ribosomal subunit protein uS13.